Reading from the N-terminus, the 466-residue chain is Dynein axonemal assembly factor 11 (466 aa).

LRR repeat units follow at residues 22–43, 45–66, 67–88, and 89–110; these read SLEE…DKWC, DLKI…SKLK, KLEY…EGCE, and ELAK…KNLQ. Residues 123-161 form the LRRCT domain; the sequence is NPCASFDHYREFVVATLPQLKWLDGKEIEPSERIKALQD. Residues 178–204 adopt a coiled-coil conformation; it reads LKRAKLKEEAQRKHQEEDKNEDKRSNA. Basic and acidic residues predominate over residues 185–202; the sequence is EEAQRKHQEEDKNEDKRS. Disordered stretches follow at residues 185–206, 268–288, and 391–466; these read EEAQ…NAGF, MEKQ…VKPP, and AFKS…PPLI. The segment covering 269 to 287 has biased composition (basic residues); sequence EKQRKKQEKLSEKKKKVKP. The CS domain maps to 301 to 396; sequence VNEPKIDFSL…GGQRAFKSMK (96 aa). Basic and acidic residues-rich tracts occupy residues 398–425 and 433–445; these read TSDR…KHSF and QEKK…RPEP. Over residues 450-460 the composition is skewed to acidic residues; that stretch reads SEEDPTFEDNP.

It belongs to the tilB family. Interacts (via CS domain) with ZMYND10 (via C-terminus). In terms of tissue distribution, expressed predominantly in testis and in nasal epithelial cells.

It localises to the cytoplasm. Its subcellular location is the cell projection. It is found in the cilium. The protein resides in the dynein axonemal particle. The protein localises to the flagellum. In terms of biological role, involved in dynein arm assembly, is important for expression and transporting outer dynein arm (ODA) proteins from the cytoplasm to the cilia. Acts as a crucial component in the formation and motility of spermatozoal flagella. This is Dynein axonemal assembly factor 11 from Homo sapiens (Human).